Consider the following 252-residue polypeptide: Imidazole glycerol phosphate synthase subunit HisF (252 aa).

Catalysis depends on residues Asp11 and Asp130.

Belongs to the HisA/HisF family. As to quaternary structure, heterodimer of HisH and HisF.

It is found in the cytoplasm. The catalysed reaction is 5-[(5-phospho-1-deoxy-D-ribulos-1-ylimino)methylamino]-1-(5-phospho-beta-D-ribosyl)imidazole-4-carboxamide + L-glutamine = D-erythro-1-(imidazol-4-yl)glycerol 3-phosphate + 5-amino-1-(5-phospho-beta-D-ribosyl)imidazole-4-carboxamide + L-glutamate + H(+). It functions in the pathway amino-acid biosynthesis; L-histidine biosynthesis; L-histidine from 5-phospho-alpha-D-ribose 1-diphosphate: step 5/9. IGPS catalyzes the conversion of PRFAR and glutamine to IGP, AICAR and glutamate. The HisF subunit catalyzes the cyclization activity that produces IGP and AICAR from PRFAR using the ammonia provided by the HisH subunit. The protein is Imidazole glycerol phosphate synthase subunit HisF of Staphylococcus epidermidis (strain ATCC 35984 / DSM 28319 / BCRC 17069 / CCUG 31568 / BM 3577 / RP62A).